The sequence spans 184 residues: Ethylene-responsive transcription factor ERF010 (184 aa).

The AP2/ERF DNA-binding region spans 20 to 77; that stretch reads PYKGIRMRKWGKWVAEIREPNKRSRLWLGSYSTPEAAARAYDTAVFYLRGPTARLNFP. Residues 123-184 are disordered; it reads QNRDSDVDNK…SSDEEWESKH (62 aa). Over residues 161-172 the composition is skewed to basic and acidic residues; that stretch reads LLDRVDLNKLPD. Residues 174–184 are compositionally biased toward acidic residues; it reads ESSDEEWESKH.

Belongs to the AP2/ERF transcription factor family. ERF subfamily.

It is found in the nucleus. Functionally, probably acts as a transcriptional activator. Binds to the GCC-box pathogenesis-related promoter element. May be involved in the regulation of gene expression by stress factors and by components of stress signal transduction pathways. The chain is Ethylene-responsive transcription factor ERF010 (ERF010) from Arabidopsis thaliana (Mouse-ear cress).